A 351-amino-acid polypeptide reads, in one-letter code: Histidinol-phosphate aminotransferase 1 (351 aa).

Position 210 is an N6-(pyridoxal phosphate)lysine (Lys210).

Belongs to the class-II pyridoxal-phosphate-dependent aminotransferase family. Histidinol-phosphate aminotransferase subfamily. As to quaternary structure, homodimer. Pyridoxal 5'-phosphate serves as cofactor.

The enzyme catalyses L-histidinol phosphate + 2-oxoglutarate = 3-(imidazol-4-yl)-2-oxopropyl phosphate + L-glutamate. It participates in amino-acid biosynthesis; L-histidine biosynthesis; L-histidine from 5-phospho-alpha-D-ribose 1-diphosphate: step 7/9. The sequence is that of Histidinol-phosphate aminotransferase 1 (hisC1) from Pasteurella multocida (strain Pm70).